The chain runs to 178 residues: Peptide methionine sulfoxide reductase MsrA (178 aa).

Cys11 is an active-site residue.

It belongs to the MsrA Met sulfoxide reductase family.

It carries out the reaction L-methionyl-[protein] + [thioredoxin]-disulfide + H2O = L-methionyl-(S)-S-oxide-[protein] + [thioredoxin]-dithiol. It catalyses the reaction [thioredoxin]-disulfide + L-methionine + H2O = L-methionine (S)-S-oxide + [thioredoxin]-dithiol. In terms of biological role, has an important function as a repair enzyme for proteins that have been inactivated by oxidation. Catalyzes the reversible oxidation-reduction of methionine sulfoxide in proteins to methionine. In Natronomonas pharaonis (strain ATCC 35678 / DSM 2160 / CIP 103997 / JCM 8858 / NBRC 14720 / NCIMB 2260 / Gabara) (Halobacterium pharaonis), this protein is Peptide methionine sulfoxide reductase MsrA.